The sequence spans 279 residues: Nitrogenase vanadium-iron protein alpha chain (279 aa).

[8Fe-7S] cluster contacts are provided by C5, C31, and C94. C213 provides a ligand contact to [7Fe-V-9S-C-homocitryl] cluster.

It belongs to the NifD/NifK/NifE/NifN family. As to quaternary structure, hexamer of two alpha, two beta, and two delta chains. Requires [8Fe-7S] cluster as cofactor. [7Fe-V-9S-C-homocitryl] cluster serves as cofactor.

The catalysed reaction is N2 + 8 reduced [2Fe-2S]-[ferredoxin] + 16 ATP + 16 H2O = H2 + 8 oxidized [2Fe-2S]-[ferredoxin] + 2 NH4(+) + 16 ADP + 16 phosphate + 6 H(+). Functionally, this vanadium-iron protein is part of the nitrogenase complex that catalyzes the key enzymatic reactions in nitrogen fixation. This is Nitrogenase vanadium-iron protein alpha chain (vnfD) from Azotobacter salinestris.